The chain runs to 274 residues: Formamidopyrimidine-DNA glycosylase (274 aa).

Pro2 functions as the Schiff-base intermediate with DNA in the catalytic mechanism. Glu3 (proton donor) is an active-site residue. Lys58 serves as the catalytic Proton donor; for beta-elimination activity. Positions 91 and 110 each coordinate DNA. An FPG-type zinc finger spans residues 238-272 (QVYDKTGQECVRCGTIIEKIQLGGRGTHFCPNCQR). The active-site Proton donor; for delta-elimination activity is the Arg262.

The protein belongs to the FPG family. As to quaternary structure, monomer. It depends on Zn(2+) as a cofactor.

It catalyses the reaction Hydrolysis of DNA containing ring-opened 7-methylguanine residues, releasing 2,6-diamino-4-hydroxy-5-(N-methyl)formamidopyrimidine.. The enzyme catalyses 2'-deoxyribonucleotide-(2'-deoxyribose 5'-phosphate)-2'-deoxyribonucleotide-DNA = a 3'-end 2'-deoxyribonucleotide-(2,3-dehydro-2,3-deoxyribose 5'-phosphate)-DNA + a 5'-end 5'-phospho-2'-deoxyribonucleoside-DNA + H(+). Involved in base excision repair of DNA damaged by oxidation or by mutagenic agents. Acts as a DNA glycosylase that recognizes and removes damaged bases. Has a preference for oxidized purines, such as 7,8-dihydro-8-oxoguanine (8-oxoG). Has AP (apurinic/apyrimidinic) lyase activity and introduces nicks in the DNA strand. Cleaves the DNA backbone by beta-delta elimination to generate a single-strand break at the site of the removed base with both 3'- and 5'-phosphates. In Streptococcus pneumoniae (strain ATCC BAA-255 / R6), this protein is Formamidopyrimidine-DNA glycosylase.